We begin with the raw amino-acid sequence, 446 residues long: Probable tRNA modification GTPase MnmE (446 aa).

(6S)-5-formyl-5,6,7,8-tetrahydrofolate-binding residues include R28, E87, and R126. Positions 218–373 (GIQVALLGPA…LKQLIWQQAT (156 aa)) constitute a TrmE-type G domain. N228 provides a ligand contact to K(+). GTP contacts are provided by residues 228–233 (NAGKST), 247–253 (TPIAGTT), and 272–275 (DTAG). S232 is a binding site for Mg(2+). Positions 247, 249, and 252 each coordinate K(+). T253 is a binding site for Mg(2+). K446 is a (6S)-5-formyl-5,6,7,8-tetrahydrofolate binding site.

Belongs to the TRAFAC class TrmE-Era-EngA-EngB-Septin-like GTPase superfamily. TrmE GTPase family. Requires K(+) as cofactor.

Its subcellular location is the plastid. It localises to the chloroplast. Exhibits a very high intrinsic GTPase hydrolysis rate. Involved in the addition of a carboxymethylaminomethyl (cmnm) group at the wobble position (U34) of certain tRNAs, forming tRNA-cmnm(5)s(2)U34. This is Probable tRNA modification GTPase MnmE from Cyanidioschyzon merolae (strain NIES-3377 / 10D) (Unicellular red alga).